A 265-amino-acid chain; its full sequence is Flavin-dependent thymidylate synthase (265 aa).

The ThyX domain occupies G11–H224. Residues S56, R79 to R81, and E87 each bind FAD. A dUMP-binding site is contributed by Q76 to R79. The ThyX motif signature appears at R79 to S89. R155 contributes to the dUMP binding site. Residues D171–N173 and H177 contribute to the FAD site. Residue R182 participates in dUMP binding. Residue R182 is the Involved in ionization of N3 of dUMP, leading to its activation of the active site.

It belongs to the thymidylate synthase ThyX family. Homotetramer. Requires FAD as cofactor.

It carries out the reaction dUMP + (6R)-5,10-methylene-5,6,7,8-tetrahydrofolate + NADPH + H(+) = dTMP + (6S)-5,6,7,8-tetrahydrofolate + NADP(+). It functions in the pathway pyrimidine metabolism; dTTP biosynthesis. Its function is as follows. Catalyzes the reductive methylation of 2'-deoxyuridine-5'-monophosphate (dUMP) to 2'-deoxythymidine-5'-monophosphate (dTMP) while utilizing 5,10-methylenetetrahydrofolate (mTHF) as the methyl donor, and NADPH and FADH(2) as the reductant. The sequence is that of Flavin-dependent thymidylate synthase from Borreliella burgdorferi (strain ATCC 35210 / DSM 4680 / CIP 102532 / B31) (Borrelia burgdorferi).